Reading from the N-terminus, the 342-residue chain is Autoinducer 2 import system permease protein LsrC (342 aa).

At 1–13 the chain is on the periplasmic side; sequence MLKFIQNNREITA. Residues 14–34 traverse the membrane as a helical segment; that stretch reads LLAVLLLFVLPGFLDRQYLSV. Topologically, residues 35 to 38 are cytoplasmic; it reads QTLT. The helical transmembrane segment at 39–59 threads the bilayer; sequence MVYSSAQILILLAMGATLVML. Topologically, residues 60–69 are periplasmic; that stretch reads TRNIDVSVGS. The chain crosses the membrane as a helical span at residues 70 to 90; it reads ITGMCAVLLGMLLNAGYSLPV. Residues 91–92 are Cytoplasmic-facing; it reads AC. The helical transmembrane segment at 93-113 threads the bilayer; the sequence is VATLLLGLLAGFFNGVLVAWL. K114 is a topological domain (periplasmic). The helical transmembrane segment at 115–135 threads the bilayer; the sequence is IPAIVATLGTLGLYRGIMLLW. Topologically, residues 136-154 are cytoplasmic; that stretch reads TGGKWIEGLPAELKQLSAP. The chain crosses the membrane as a helical span at residues 155–175; sequence LLLGVSAIGWLTIILVAFMAW. The Periplasmic portion of the chain corresponds to 176–212; that stretch reads LLAKTAFGRSFYATGDNLQGARQLGVRTEAIRIVAFS. A helical transmembrane segment spans residues 213–233; it reads LNGCMAALAGIVFASQIGFIP. Residues 234–251 lie on the Cytoplasmic side of the membrane; it reads NQTGTGLEMKAIAACVLG. A helical membrane pass occupies residues 252–272; that stretch reads GISLLGGSGAIIGAVLGAWFL. Over 273 to 283 the chain is Periplasmic; the sequence is TQIDSVLVLLR. A helical membrane pass occupies residues 284 to 304; it reads IPAWWNDFIAGLVLLAVLVFD. Topologically, residues 305–342 are cytoplasmic; the sequence is GRLRCALELNLRRQKYARFMTPPPSVKPASSGKKREAA.

It belongs to the binding-protein-dependent transport system permease family. AraH/RbsC subfamily. The complex is composed of two ATP-binding proteins (LsrA), two transmembrane proteins (LsrC and LsrD) and a solute-binding protein (LsrB).

The protein localises to the cell inner membrane. In terms of biological role, part of the ABC transporter complex LsrABCD involved in autoinducer 2 (AI-2) import. Probably responsible for the translocation of the substrate across the membrane. This is Autoinducer 2 import system permease protein LsrC (lsrC) from Escherichia coli O157:H7.